The sequence spans 198 residues: Thymidine kinase (198 aa).

ATP is bound by residues 15–22 (GCMFSGKT) and 87–90 (DEAQ). The Proton acceptor role is filled by E88. Zn(2+) is bound by residues C144, C147, C182, and H185.

It belongs to the thymidine kinase family. As to quaternary structure, homotetramer.

The protein resides in the cytoplasm. It catalyses the reaction thymidine + ATP = dTMP + ADP + H(+). This chain is Thymidine kinase, found in Coprothermobacter proteolyticus (strain ATCC 35245 / DSM 5265 / OCM 4 / BT).